The sequence spans 201 residues: Thymidine kinase (201 aa).

ATP-binding positions include 9 to 16 and 87 to 90; these read SAMNAGKS and DECH. Glu88 acts as the Proton acceptor in catalysis. 4 residues coordinate Zn(2+): Cys145, Cys147, Cys182, and His185.

It belongs to the thymidine kinase family. As to quaternary structure, homotetramer.

It localises to the cytoplasm. The catalysed reaction is thymidine + ATP = dTMP + ADP + H(+). This is Thymidine kinase from Photorhabdus laumondii subsp. laumondii (strain DSM 15139 / CIP 105565 / TT01) (Photorhabdus luminescens subsp. laumondii).